A 473-amino-acid chain; its full sequence is Glucose-1-phosphate adenylyltransferase small subunit, chloroplastic/amyloplastic (473 aa).

Positions 1 to 36 (MDVPLASKTFPSPSPSKREQCNIDGHKSSSKHADLN) are disordered. Residues 16 to 36 (SKREQCNIDGHKSSSKHADLN) show a composition bias toward basic and acidic residues.

Belongs to the bacterial/plant glucose-1-phosphate adenylyltransferase family. As to quaternary structure, heterotetramer. As to expression, abundantly expressed in the whole grains, a slightly less abundant expression is seen in leaves, while a low level expression is seen in the roots. A greater expression is seen in the endosperm than in the embryo and pericarp layers.

The protein resides in the plastid. It is found in the chloroplast. Its subcellular location is the amyloplast. It catalyses the reaction alpha-D-glucose 1-phosphate + ATP + H(+) = ADP-alpha-D-glucose + diphosphate. It participates in glycan biosynthesis; starch biosynthesis. Insensitive to 3'phosphoglycerate and orthophosphate. Its function is as follows. This protein plays a role in synthesis of starch. It catalyzes the synthesis of the activated glycosyl donor, ADP-glucose from Glc-1-P and ATP. This is Glucose-1-phosphate adenylyltransferase small subunit, chloroplastic/amyloplastic (AGP-S) from Triticum aestivum (Wheat).